The chain runs to 193 residues: Ion-translocating oxidoreductase complex subunit A (193 aa).

The next 6 helical transmembrane spans lie at L5–L25, I39–V59, F62–A82, L102–L122, A134–I154, and S171–V191.

The protein belongs to the NqrDE/RnfAE family. The complex is composed of six subunits: RnfA, RnfB, RnfC, RnfD, RnfE and RnfG.

It is found in the cell inner membrane. Functionally, part of a membrane-bound complex that couples electron transfer with translocation of ions across the membrane. This chain is Ion-translocating oxidoreductase complex subunit A, found in Yersinia pestis (strain Pestoides F).